A 350-amino-acid chain; its full sequence is Glucose-6-phosphate 3-dehydrogenase (350 aa).

This sequence belongs to the Gfo/Idh/MocA family.

It catalyses the reaction D-glucose 6-phosphate + NAD(+) = 3-dehydro-D-glucose 6-phosphate + NADH + H(+). It functions in the pathway antibiotic biosynthesis; kanosamine biosynthesis. In terms of biological role, involved in the biosynthesis of kanosamine (3-amino-3-deoxy-D-glucose), which is known to have antibiotic and antifungal properties, and to be a precursor of the antibiotic neotrehalosadiamine (3,3'-diamino-3,3'-dideoxy-alpha,beta-trehalose (NTD)). Catalyzes the oxidation of glucose 6-phosphate to 3-oxo-D-glucose 6-phosphate. It can only use NAD. This Bacillus subtilis (strain 168) protein is Glucose-6-phosphate 3-dehydrogenase (ntdC).